Reading from the N-terminus, the 422-residue chain is Cysteate synthase (422 aa).

The residue at position 105 (Lys-105) is an N6-(pyridoxal phosphate)lysine. Pyridoxal 5'-phosphate-binding residues include Asn-131 and Thr-379.

The protein belongs to the threonine synthase family. Cysteate synthase subfamily. Homotrimer. Pyridoxal 5'-phosphate serves as cofactor.

It catalyses the reaction O-phospho-L-serine + sulfite + H(+) = L-cysteate + phosphate. It participates in cofactor biosynthesis; coenzyme M biosynthesis. In terms of biological role, specifically catalyzes the beta-elimination of phosphate from L-phosphoserine and the beta-addition of sulfite to the dehydroalanine intermediate to produce L-cysteate. In Methanospirillum hungatei JF-1 (strain ATCC 27890 / DSM 864 / NBRC 100397 / JF-1), this protein is Cysteate synthase.